Here is a 913-residue protein sequence, read N- to C-terminus: Isoleucine--tRNA ligase (913 aa).

The short motif at 57 to 67 is the 'HIGH' region element; the sequence is PYANGDIHLGT. Residue Glu549 coordinates L-isoleucyl-5'-AMP. The short motif at 590–594 is the 'KMSKS' region element; it reads KMSKS. Lys593 is a binding site for ATP. Residues Cys881, Cys884, Cys901, and Cys904 each contribute to the Zn(2+) site.

It belongs to the class-I aminoacyl-tRNA synthetase family. IleS type 1 subfamily. In terms of assembly, monomer. It depends on Zn(2+) as a cofactor.

Its subcellular location is the cytoplasm. The enzyme catalyses tRNA(Ile) + L-isoleucine + ATP = L-isoleucyl-tRNA(Ile) + AMP + diphosphate. Its function is as follows. Catalyzes the attachment of isoleucine to tRNA(Ile). As IleRS can inadvertently accommodate and process structurally similar amino acids such as valine, to avoid such errors it has two additional distinct tRNA(Ile)-dependent editing activities. One activity is designated as 'pretransfer' editing and involves the hydrolysis of activated Val-AMP. The other activity is designated 'posttransfer' editing and involves deacylation of mischarged Val-tRNA(Ile). The protein is Isoleucine--tRNA ligase of Fervidobacterium nodosum (strain ATCC 35602 / DSM 5306 / Rt17-B1).